We begin with the raw amino-acid sequence, 351 residues long: Glycerol-3-phosphate dehydrogenase [NAD(P)+] (351 aa).

Residues serine 18, tryptophan 19, arginine 38, and lysine 122 each coordinate NADPH. Residues lysine 122, glycine 153, and serine 155 each contribute to the sn-glycerol 3-phosphate site. Alanine 157 contributes to the NADPH binding site. Sn-glycerol 3-phosphate-binding residues include lysine 208, aspartate 261, serine 271, arginine 272, and asparagine 273. Lysine 208 (proton acceptor) is an active-site residue. Arginine 272 is a binding site for NADPH. Glutamate 297 is a binding site for NADPH.

It belongs to the NAD-dependent glycerol-3-phosphate dehydrogenase family.

Its subcellular location is the cytoplasm. It catalyses the reaction sn-glycerol 3-phosphate + NAD(+) = dihydroxyacetone phosphate + NADH + H(+). The catalysed reaction is sn-glycerol 3-phosphate + NADP(+) = dihydroxyacetone phosphate + NADPH + H(+). Its pathway is membrane lipid metabolism; glycerophospholipid metabolism. Catalyzes the reduction of the glycolytic intermediate dihydroxyacetone phosphate (DHAP) to sn-glycerol 3-phosphate (G3P), the key precursor for phospholipid synthesis. This chain is Glycerol-3-phosphate dehydrogenase [NAD(P)+], found in Bordetella bronchiseptica (strain ATCC BAA-588 / NCTC 13252 / RB50) (Alcaligenes bronchisepticus).